The chain runs to 62 residues: Large ribosomal subunit protein bL32m (62 aa).

Belongs to the bacterial ribosomal protein bL32 family.

Its subcellular location is the mitochondrion. The sequence is that of Large ribosomal subunit protein bL32m (RPL32) from Reclinomonas americana.